We begin with the raw amino-acid sequence, 1704 residues long: Vitellogenin-1 (1704 aa).

The N-terminal stretch at 1–14 is a signal peptide; it reads MKAVVLALTLAFVA. The Vitellogenin domain occupies 22–660; that stretch reads FAAGKTYVYK…DAATFMPKSF (639 aa). 16 N-linked (GlcNAc...) asparagine glycosylation sites follow: Asn446, Asn635, Asn903, Asn908, Asn1019, Asn1054, Asn1080, Asn1121, Asn1174, Asn1285, Asn1322, Asn1375, Asn1379, Asn1405, Asn1456, and Asn1512. The span at 1078–1109 shows a compositional bias: low complexity; the sequence is RRNSSSSSSSSSSSSSESRSSRSSSSSSSSSR. The segment at 1078–1213 is disordered; it reads RRNSSSSSSS…SSDRRSKEVM (136 aa). A compositionally biased stretch (low complexity) spans 1122–1204; the sequence is SSSSSSSRRS…FSDSSSSSSS (83 aa). Residues 1442–1617 form the VWFD domain; that stretch reads AECSFVEDTL…SWILPAESCR (176 aa). 2 disulfide bridges follow: Cys1444–Cys1580 and Cys1467–Cys1616.

Phosvitin, an egg yolk storage protein, is one of the most highly phosphorylated (10%) proteins in nature. In terms of processing, the N-terminal of the blood vitellogenin is blocked. As to expression, produced by the liver, secreted into the blood and then sequestered by receptor mediated endocytosis into growing oocytes, where it is generally cleaved, giving rise to the respective yolk components composed of complex suite of small cleavage products.

In terms of biological role, precursor of the major egg-yolk proteins that are sources of nutrients during early development of oviparous organisms. The polypeptide is Vitellogenin-1 (vtg1) (Fundulus heteroclitus (Killifish)).